A 162-amino-acid chain; its full sequence is Ribonuclease P protein component (162 aa).

Residues 1 to 62 (MDEKDLATQP…GPPKAGGRLL (62 aa)) are disordered. Residues 21–36 (GPHEDPRRQERAEAQA) are compositionally biased toward basic and acidic residues.

The protein belongs to the RnpA family. As to quaternary structure, consists of a catalytic RNA component (M1 or rnpB) and a protein subunit.

It carries out the reaction Endonucleolytic cleavage of RNA, removing 5'-extranucleotides from tRNA precursor.. Its function is as follows. RNaseP catalyzes the removal of the 5'-leader sequence from pre-tRNA to produce the mature 5'-terminus. It can also cleave other RNA substrates such as 4.5S RNA. The protein component plays an auxiliary but essential role in vivo by binding to the 5'-leader sequence and broadening the substrate specificity of the ribozyme. This Thermus aquaticus protein is Ribonuclease P protein component.